A 549-amino-acid polypeptide reads, in one-letter code: MRRSPSRSNNNFAVPNCSTNSNSSQQQLTTPSDDLNSNEPNDPDDSRSLPTIKKFNNKHSINNYNTLASAGKNNNNKRASNDNLLIPGENAHKQKIYTKDENLKSLYLDIDVSVAKALSSSATAPKLINTARTSSTTTATTSNNILTSPSYRESNYSSPSSYSFSSYYSSATSASSSTSSFLKSSGLSSRVKSPSSSVKAGSFGAPSSPTSGIPNPKSSKKPIFLRRYSHDTSSNEGLDIDVAIEKLLQVGESREITKTSKKKNFPFHSWEIQLICYHAREIFLNQPTLLRLQAPIKVVGDVHGQFNDLLRILKLSGVPSDTNYLFLGDYVDRGKNSLETILLLLCYKIKYKDNFFMLRGNHESANVTKMYGFYDECKRRLSSKVWKMFVDVFNTLPLAAIIQDKIFCVHGGISPDLHDMKQIEKVARPTDIPESGLVTDLLWSDPDPQVTDWSENDRGVSYTFSKRNVLDFCAKFKFDLILRGHMVVEDGYEFFARKKFVTIFSAPNYCGEFHNWGAVMSVTTGMMCSFELLKPRALKNKKKLYKTKV.

Residues 1–13 (MRRSPSRSNNNFA) are compositionally biased toward polar residues. Disordered regions lie at residues 1–50 (MRRS…RSLP), 64–85 (YNTLASAGKNNNNKRASNDNLL), 133–158 (TSSTTTATTSNNILTSPSYRESNYSS), and 189–219 (SRVKSPSSSVKAGSFGAPSSPTSGIPNPKSS). 2 stretches are compositionally biased toward low complexity: residues 16 to 32 (NCSTNSNSSQQQLTTPS) and 68 to 83 (ASAGKNNNNKRASNDN). Polar residues predominate over residues 205–217 (APSSPTSGIPNPK). Positions 301, 303, 329, and 361 each coordinate Mn(2+). The active-site Proton donor is His-362. Mn(2+) is bound by residues His-410 and His-485.

Belongs to the PPP phosphatase family. PP-Z subfamily. The cofactor is Mn(2+).

It catalyses the reaction O-phospho-L-seryl-[protein] + H2O = L-seryl-[protein] + phosphate. The enzyme catalyses O-phospho-L-threonyl-[protein] + H2O = L-threonyl-[protein] + phosphate. Functionally, phosphatase involved in the regulation of protein synthesis. Affects translational accuracy. In Saccharomyces cerevisiae (strain ATCC 204508 / S288c) (Baker's yeast), this protein is Serine/threonine-protein phosphatase PPQ (PPQ1).